Here is a 424-residue protein sequence, read N- to C-terminus: MLDIKRIRTDFEAVAEKLATRGVDAAVLNEMKEIDAKRRNILIKVETLKAERNTVSAEIAQAKRNKENTDDKIAAMQNLSAEVKALDAELAEIDAKLTEFTTTLPNIPADSVPVGADXXXNVEVRRWGTPREFDFEPKAHWDLGEDLGILDWERGGKVTGARFLFYKGLGARLERAIYNFMLDEHGKEGYTEVITPYIVNHDSMFGTGQYPKFKEDTFELSDTNFVLIPTAEVPLTNYYRDEILDGKDLPIYFTAMSPSFRSEAGSAGRDTRGLIRLHQFHKVEMVKFAKPEESYEELEKMTANAENILQKLNLPYRVVALSTGDMGFSATKTYDLEVWIPAQNNYREISSCSNTEDFQARRAQIRYRDEADGKVKLLHTLNGSGLAVGRTVAAILENYQNEDGSVTIPEALRPYMGGAEVIKP.

Position 230–232 (230–232) interacts with L-serine; the sequence is TAE. ATP is bound at residue 261-263; sequence RSE. Glu284 serves as a coordination point for L-serine. 348 to 351 contacts ATP; that stretch reads EISS. Ser384 serves as a coordination point for L-serine.

This sequence belongs to the class-II aminoacyl-tRNA synthetase family. Type-1 seryl-tRNA synthetase subfamily. Homodimer. The tRNA molecule binds across the dimer.

It localises to the cytoplasm. The catalysed reaction is tRNA(Ser) + L-serine + ATP = L-seryl-tRNA(Ser) + AMP + diphosphate + H(+). It carries out the reaction tRNA(Sec) + L-serine + ATP = L-seryl-tRNA(Sec) + AMP + diphosphate + H(+). The protein operates within aminoacyl-tRNA biosynthesis; selenocysteinyl-tRNA(Sec) biosynthesis; L-seryl-tRNA(Sec) from L-serine and tRNA(Sec): step 1/1. Catalyzes the attachment of serine to tRNA(Ser). Is also able to aminoacylate tRNA(Sec) with serine, to form the misacylated tRNA L-seryl-tRNA(Sec), which will be further converted into selenocysteinyl-tRNA(Sec). The polypeptide is Serine--tRNA ligase (Streptococcus pneumoniae serotype 19F (strain G54)).